A 542-amino-acid polypeptide reads, in one-letter code: Pre-mRNA-splicing factor 38B (542 aa).

Positions 1–12 are enriched in polar residues; that stretch reads MANNSPALTGNS. Residues 1–24 are disordered; that stretch reads MANNSPALTGNSQPQHQAAAAVVQ. Residue alanine 2 is modified to N-acetylalanine. Serine 5 bears the Phosphoserine mark. The segment covering 13 to 24 has biased composition (low complexity); sequence QPQHQAAAAVVQ. Residue lysine 227 is modified to N6-acetyllysine. Residues 232 to 542 are disordered; it reads QIKTRPRKIK…KEHKNKDETV (311 aa). Over residues 243 to 255 the composition is skewed to basic and acidic residues; it reads DGKEGVEEIDRHI. The segment covering 256–284 has biased composition (basic residues); it reads ERRRSRSPRRSLSPRRSPRRSRSRSHHRD. A phosphoserine mark is found at serine 288, serine 290, serine 318, and serine 320. Residues 291–327 are compositionally biased toward basic and acidic residues; sequence FDRELEREKERQRLEREAKEREKERRRSRSLDRGLDR. A coiled-coil region spans residues 292-323; sequence DRELEREKERQRLEREAKEREKERRRSRSLDR. Positions 328 to 344 are enriched in basic residues; it reads RRSRSRERHRSRSRSRD. The segment covering 345–418 has biased composition (basic and acidic residues); it reads RKGDRRDRDR…DRRHRDDKKE (74 aa). Over residues 419–448 the composition is skewed to basic residues; the sequence is SKKKHSRSRSRERKHRSRSRSRNAGKRSRS. Phosphoserine is present on serine 446. Basic and acidic residues predominate over residues 449–466; it reads RSKDKASKHKNESKEKSN. Serine 471, serine 473, and serine 479 each carry phosphoserine. 2 stretches are compositionally biased toward basic and acidic residues: residues 479–492 and 499–522; these read SVEK…PSRE and RSQD…DHQR. Serine 523, serine 525, and serine 530 each carry phosphoserine. The span at 530–542 shows a compositional bias: basic and acidic residues; that stretch reads SQEKEHKNKDETV.

The protein belongs to the PRP38 family.

It is found in the nucleus. May be required for pre-mRNA splicing. The sequence is that of Pre-mRNA-splicing factor 38B (Prpf38b) from Rattus norvegicus (Rat).